We begin with the raw amino-acid sequence, 130 residues long: Small ribosomal subunit protein uS9 (130 aa).

This sequence belongs to the universal ribosomal protein uS9 family.

The protein is Small ribosomal subunit protein uS9 of Shewanella denitrificans (strain OS217 / ATCC BAA-1090 / DSM 15013).